A 518-amino-acid chain; its full sequence is Putative beta-xylosidase (518 aa).

The active-site Proton acceptor is the Asp-47. The Proton donor role is filled by Glu-203.

Belongs to the glycosyl hydrolase 43 family.

It carries out the reaction Hydrolysis of (1-&gt;4)-beta-D-xylans, to remove successive D-xylose residues from the non-reducing termini.. The polypeptide is Putative beta-xylosidase (Xylanibacter ruminicola (Prevotella ruminicola)).